Reading from the N-terminus, the 448-residue chain is Phosphohexose mutases (448 aa).

Serine 97 (phosphoserine intermediate) is an active-site residue. Residues serine 97, aspartate 237, aspartate 239, and aspartate 241 each contribute to the Mg(2+) site.

The protein belongs to the phosphohexose mutase family. The cofactor is Mg(2+).

It catalyses the reaction alpha-D-glucose 1-phosphate = alpha-D-glucose 6-phosphate. It carries out the reaction alpha-D-mannose 1-phosphate = D-mannose 6-phosphate. The protein operates within nucleotide-sugar biosynthesis; GDP-alpha-D-mannose biosynthesis; alpha-D-mannose 1-phosphate from D-fructose 6-phosphate: step 2/2. Functionally, involved in xanthan production. The protein is Phosphohexose mutases (xanA) of Xanthomonas campestris pv. campestris (strain B100).